Here is a 217-residue protein sequence, read N- to C-terminus: Translation initiation factor 6 (217 aa).

The protein belongs to the eIF-6 family.

Its function is as follows. Binds to the 50S ribosomal subunit and prevents its association with the 30S ribosomal subunit to form the 70S initiation complex. This is Translation initiation factor 6 from Methanococcoides burtonii (strain DSM 6242 / NBRC 107633 / OCM 468 / ACE-M).